The following is an 88-amino-acid chain: UPF0213 protein SAG0778 (88 aa).

Positions 4–80 constitute a GIY-YIG domain; the sequence is VPAYMYVLEC…QKTRQAKLTY (77 aa).

It belongs to the UPF0213 family.

This is UPF0213 protein SAG0778 from Streptococcus agalactiae serotype V (strain ATCC BAA-611 / 2603 V/R).